A 567-amino-acid polypeptide reads, in one-letter code: Phenylalanine--tRNA ligase beta subunit (567 aa).

One can recognise a B5 domain in the interval 287–362 (YFQEEVEFNV…IGEGLASFHP (76 aa)). Aspartate 340, aspartate 346, glutamate 349, and aspartate 350 together coordinate Mg(2+).

Belongs to the phenylalanyl-tRNA synthetase beta subunit family. Type 2 subfamily. In terms of assembly, tetramer of two alpha and two beta subunits. The cofactor is Mg(2+).

The protein localises to the cytoplasm. It catalyses the reaction tRNA(Phe) + L-phenylalanine + ATP = L-phenylalanyl-tRNA(Phe) + AMP + diphosphate + H(+). This chain is Phenylalanine--tRNA ligase beta subunit, found in Borreliella afzelii (strain PKo) (Borrelia afzelii).